The primary structure comprises 512 residues: Histidine ammonia-lyase (512 aa).

The segment at residues 141-143 is a cross-link (5-imidazolinone (Ala-Gly)); it reads ASG. S142 bears the 2,3-didehydroalanine (Ser) mark.

Belongs to the PAL/histidase family. Contains an active site 4-methylidene-imidazol-5-one (MIO), which is formed autocatalytically by cyclization and dehydration of residues Ala-Ser-Gly.

Its subcellular location is the cytoplasm. The enzyme catalyses L-histidine = trans-urocanate + NH4(+). It participates in amino-acid degradation; L-histidine degradation into L-glutamate; N-formimidoyl-L-glutamate from L-histidine: step 1/3. The protein is Histidine ammonia-lyase of Bacillus velezensis (strain DSM 23117 / BGSC 10A6 / LMG 26770 / FZB42) (Bacillus amyloliquefaciens subsp. plantarum).